Reading from the N-terminus, the 238-residue chain is Histone H1 (238 aa).

Composition is skewed to low complexity over residues 21–34 (AAVD…AKAP) and 123–132 (AKAPAAVKPK). Disordered regions lie at residues 21–57 (AAVD…AHPS) and 123–238 (AKAP…KAKK). Residues 54–124 (AHPSYAEMVS…KVKGSYKLAK (71 aa)) enclose the H15 domain. A compositionally biased stretch (basic residues) spans 133–197 (TATKKKPAAK…AAKPKAKAAA (65 aa)). Composition is skewed to low complexity over residues 198 to 208 (KKAPAAATPKK) and 217 to 230 (KRAT…PAKK).

Belongs to the histone H1/H5 family.

It localises to the nucleus. The protein localises to the chromosome. In terms of biological role, histones H1 are necessary for the condensation of nucleosome chains into higher-order structures. This is Histone H1 from Triticum aestivum (Wheat).